The following is a 257-amino-acid chain: Membrane protein insertase YidC 1 (257 aa).

The first 20 residues, 1–20 (MYRKFGMAAMLVSILLLMTG), serve as a signal peptide directing secretion. C21 carries the N-palmitoyl cysteine lipid modification. C21 carries S-diacylglycerol cysteine lipidation. 5 helical membrane passes run 35–55 (IWDSYFVYPLSWLMIYFANAF), 59–79 (FGLAIIVVTLLIRLLILPLMI), 129–149 (LAGCFPVLIQMPILLAFYHAI), 160–180 (FLWFVLNQPDPILLPIIAGIT), and 205–225 (VMILVFAMFLPSSLALYWVIG).

The protein belongs to the OXA1/ALB3/YidC family. Type 2 subfamily.

It localises to the cell membrane. Required for the insertion and/or proper folding and/or complex formation of integral membrane proteins into the membrane. Involved in integration of membrane proteins that insert both dependently and independently of the Sec translocase complex, as well as at least some lipoproteins. This Halalkalibacterium halodurans (strain ATCC BAA-125 / DSM 18197 / FERM 7344 / JCM 9153 / C-125) (Bacillus halodurans) protein is Membrane protein insertase YidC 1.